The primary structure comprises 1384 residues: DNA-directed RNA polymerase subunit beta (1384 aa).

Belongs to the RNA polymerase beta chain family. In terms of assembly, the RNAP catalytic core consists of 2 alpha, 1 beta, 1 beta' and 1 omega subunit. When a sigma factor is associated with the core the holoenzyme is formed, which can initiate transcription.

It carries out the reaction RNA(n) + a ribonucleoside 5'-triphosphate = RNA(n+1) + diphosphate. Functionally, DNA-dependent RNA polymerase catalyzes the transcription of DNA into RNA using the four ribonucleoside triphosphates as substrates. The sequence is that of DNA-directed RNA polymerase subunit beta from Xylella fastidiosa (strain M23).